We begin with the raw amino-acid sequence, 144 residues long: Single-stranded DNA-binding protein 3 (144 aa).

The region spanning 1 to 103 (MNKVVLIGRL…IVAEEVQFLE (103 aa)) is the SSB domain. Residues 112–134 (MANDQFNNGNENGSMQLPDNNDI) show a composition bias toward polar residues. The disordered stretch occupies residues 112-144 (MANDQFNNGNENGSMQLPDNNDITPIDDGDIPF).

In terms of assembly, homotetramer.

The sequence is that of Single-stranded DNA-binding protein 3 (ssb3) from Clostridium acetobutylicum (strain ATCC 824 / DSM 792 / JCM 1419 / IAM 19013 / LMG 5710 / NBRC 13948 / NRRL B-527 / VKM B-1787 / 2291 / W).